We begin with the raw amino-acid sequence, 358 residues long: MRLIIAGGGTGGHLFPGIAVADEFLARSPENEVLFVGTERGIEARLLPKLGYKLALISASGMKGMGTIKKIMSAGRLLYGYSQSRKILKEFRPDLVLGVGGYASAPIVLAARGMGIRRFIHEQNAFPGLTNKVLGRFVDGVFISMPEAESFFPKEMTQMTGNPIRKEILWGFQERVRSIGDTFSILVFGGSAGAQRVNSALLEALPHLEGVKGKLRITHQTGEKDAARVREGYQAQGFQAQVLSFIDDMSAAYGAADLVVCRAGATTIAEVTACGKGCIFIPFPYAADDHQRKNAESLVHKNAGVMILEEDLTGERLAAKILELMEHPAELAEIEKNARALAQLDAAQAIVSAMVSKN.

Residues 10-12 (TGG), asparagine 124, arginine 165, serine 191, isoleucine 246, and glutamine 291 contribute to the UDP-N-acetyl-alpha-D-glucosamine site.

The protein belongs to the glycosyltransferase 28 family. MurG subfamily.

It is found in the cell inner membrane. The catalysed reaction is di-trans,octa-cis-undecaprenyl diphospho-N-acetyl-alpha-D-muramoyl-L-alanyl-D-glutamyl-meso-2,6-diaminopimeloyl-D-alanyl-D-alanine + UDP-N-acetyl-alpha-D-glucosamine = di-trans,octa-cis-undecaprenyl diphospho-[N-acetyl-alpha-D-glucosaminyl-(1-&gt;4)]-N-acetyl-alpha-D-muramoyl-L-alanyl-D-glutamyl-meso-2,6-diaminopimeloyl-D-alanyl-D-alanine + UDP + H(+). The protein operates within cell wall biogenesis; peptidoglycan biosynthesis. Cell wall formation. Catalyzes the transfer of a GlcNAc subunit on undecaprenyl-pyrophosphoryl-MurNAc-pentapeptide (lipid intermediate I) to form undecaprenyl-pyrophosphoryl-MurNAc-(pentapeptide)GlcNAc (lipid intermediate II). The protein is UDP-N-acetylglucosamine--N-acetylmuramyl-(pentapeptide) pyrophosphoryl-undecaprenol N-acetylglucosamine transferase of Citrifermentans bemidjiense (strain ATCC BAA-1014 / DSM 16622 / JCM 12645 / Bem) (Geobacter bemidjiensis).